Here is a 171-residue protein sequence, read N- to C-terminus: Calcium channel flower homolog (171 aa).

The Cytoplasmic portion of the chain corresponds to 1–31; it reads MSGSGAAGAAAGPAPPAQEEGMTWWYRWLCR. Residues 32 to 52 form a helical membrane-spanning segment; sequence LAGVLGAVSCAISGLFNCVTI. Over 53–56 the chain is Extracellular; that stretch reads HPLN. The helical transmembrane segment at 57 to 77 threads the bilayer; that stretch reads IAAGVWMIMNAFILLLCEAPF. Residues 78–101 lie on the Cytoplasmic side of the membrane; the sequence is CCQFVEFANTVAEKVDRLRSWQKA. Residues 102–122 form a helical membrane-spanning segment; that stretch reads VFYCGMAIVPIVMSLTLTTLL. At 123–124 the chain is on the extracellular side; that stretch reads GN. Residues 125-141 traverse the membrane as a helical segment; the sequence is AIAFATGVLYGLSALGK. Over 142–171 the chain is Cytoplasmic; it reads KGDAISYARIQQQRQQADEEKLAETFEGEL.

Belongs to the calcium channel flower family. In terms of assembly, interacts with adaptor protein complex 2 (AP-2). Expressed in neurons in the brain (at protein level). Expressed in neuroblastoma cell lines (at protein level). Expressed in cytotoxic T-lymphoocytes (at protein level). As to expression, low levels of expression in various tissues including the brain, eye, heart, liver and colon. Expression in the heart is at slightly higher levels than isoform 3. Expressed in skin cells. In terms of tissue distribution, very low levels of expression in the brain, liver and eye. Detected at very low levels of expression in skin cells. Expressed in various tissues, with highest levels of expression in the brain and eye. Expressed in skin cells. Low levels of expression in the liver, colon, heart and spleen. As to expression, barely detected in the brain and liver.

The protein resides in the cell membrane. The protein localises to the vesicle. Its function is as follows. Transmembrane protein which mediates synaptic endocytosis and fitness-based cell culling. In response to different stimulus strengths, controls two major modes of synaptic vesicle (SV) retrieval in hippocampal neurons; Clathrin-mediated endocytosis (CME) in response to mild stimulation and activity-dependent bulk endocytosis (ADBE) in response to strong stimulation. In cytotoxic T-lymphoocytes (CTLs) facilitates calcium-dependent endocytosis of cytotoxic granules (CGs) at the immuno synapse. Different isoforms work as fitness fingerprints in 'loser' and 'winner' cells and thereby mediate win/lose decisions as part of the cell competition process. The polypeptide is Calcium channel flower homolog (Cacfd1) (Mus musculus (Mouse)).